The sequence spans 62 residues: Phyllokinin-1 (62 aa).

Positions 1–19 (MSFLKKSLFLVLFLGLVSS) are cleaved as a signal peptide. A propeptide spanning residues 20–48 (SICEEEKRETEEEENEDEIEEESEEKKRE) is cleaved from the precursor. Residues 22 to 62 (CEEEKRETEEEENEDEIEEESEEKKREDPERPPGFTPFRVY) are disordered. Acidic residues predominate over residues 30-42 (EEEENEDEIEEES). The span at 43-52 (EEKKREDPER) shows a compositional bias: basic and acidic residues. A Sulfotyrosine; partial modification is found at Tyr62.

It belongs to the frog skin active peptide (FSAP) family. Bradykinin-related peptide subfamily. Post-translationally, asp,Pro,Glu-[Thr6,Val10]-phyllokinin and [Thr6,Val10]-phyllokinin occur in sulfated and nonsulfated forms. [Thr6]-bradykinin and Des-Arg-[Thr6]-bradykinin are nonsulfated. As to expression, expressed by the skin glands.

It is found in the secreted. Functionally, inhibits ACE with a Ki of 1.6 uM, and targets B2 bradykinin receptor (BDKRB2). Provokes contraction of smooth muscle preparation (ileum). In vivo, induces an early hyperalgesic effects in living rats after intraplantar injection. This chain is Phyllokinin-1, found in Pithecopus azureus (Orange-legged monkey tree frog).